The sequence spans 111 residues: Movement protein TGB2 (111 aa).

Residues 1 to 16 (MSSHQNFLTPPPDHSK) lie on the Cytoplasmic side of the membrane. The helical transmembrane segment at 17-37 (AILAVAVGVGLAIVLHFSLSY) threads the bilayer. The Lumenal segment spans residues 38–72 (KLPSPGDNIHSLPFGGTYRDGTKSIIYNSPHRGPG). Residues 73–93 (QSGALPIITVFAIIECTLHVL) traverse the membrane as a helical segment. Topologically, residues 94–111 (RKRDNPVRPQHSDCPNCS) are cytoplasmic.

It belongs to the Tymovirales TGBp2 protein family.

The protein localises to the host endoplasmic reticulum membrane. Functionally, plays a role in viral cell-to-cell propagation, by facilitating genome transport to neighboring plant cells through plasmosdesmata,. This Carica papaya (Papaya) protein is Movement protein TGB2.